Reading from the N-terminus, the 460-residue chain is Acetyl-coenzyme A carboxylase carboxyl transferase subunit beta, chloroplastic (460 aa).

In terms of domain architecture, CoA carboxyltransferase N-terminal spans 179–460 (LWVQCESCYG…GFFPLTQNGN (282 aa)). Residues Cys183, Cys186, Cys202, and Cys205 each contribute to the Zn(2+) site. The segment at 183–205 (CESCYGLNYKKFFKSKMNICEHC) adopts a C4-type zinc-finger fold.

It belongs to the AccD/PCCB family. In terms of assembly, acetyl-CoA carboxylase is a heterohexamer composed of biotin carboxyl carrier protein, biotin carboxylase and 2 subunits each of ACCase subunit alpha and ACCase plastid-coded subunit beta (accD). It depends on Zn(2+) as a cofactor.

It is found in the plastid. The protein resides in the chloroplast stroma. The catalysed reaction is N(6)-carboxybiotinyl-L-lysyl-[protein] + acetyl-CoA = N(6)-biotinyl-L-lysyl-[protein] + malonyl-CoA. It functions in the pathway lipid metabolism; malonyl-CoA biosynthesis; malonyl-CoA from acetyl-CoA: step 1/1. Component of the acetyl coenzyme A carboxylase (ACC) complex. Biotin carboxylase (BC) catalyzes the carboxylation of biotin on its carrier protein (BCCP) and then the CO(2) group is transferred by the transcarboxylase to acetyl-CoA to form malonyl-CoA. The polypeptide is Acetyl-coenzyme A carboxylase carboxyl transferase subunit beta, chloroplastic (Cicer arietinum (Chickpea)).